The sequence spans 460 residues: Proline--tRNA ligase (460 aa).

It belongs to the class-II aminoacyl-tRNA synthetase family. ProS type 3 subfamily. As to quaternary structure, homodimer.

The protein localises to the cytoplasm. The catalysed reaction is tRNA(Pro) + L-proline + ATP = L-prolyl-tRNA(Pro) + AMP + diphosphate. Functionally, catalyzes the attachment of proline to tRNA(Pro) in a two-step reaction: proline is first activated by ATP to form Pro-AMP and then transferred to the acceptor end of tRNA(Pro). The chain is Proline--tRNA ligase from Methanococcus maripaludis (strain C7 / ATCC BAA-1331).